Reading from the N-terminus, the 400-residue chain is Probable transposase for insertion sequence element ISRM3-like (400 aa).

This sequence belongs to the transposase mutator family.

Required for the transposition of the insertion element. The chain is Probable transposase for insertion sequence element ISRM3-like from Sinorhizobium fredii (strain NBRC 101917 / NGR234).